A 283-amino-acid chain; its full sequence is Protein FAM78A (283 aa).

Belongs to the FAM78 family.

In Homo sapiens (Human), this protein is Protein FAM78A (FAM78A).